The chain runs to 255 residues: tRNA1(Val) (adenine(37)-N6)-methyltransferase (255 aa).

This sequence belongs to the methyltransferase superfamily. tRNA (adenine-N(6)-)-methyltransferase family.

Its subcellular location is the cytoplasm. The catalysed reaction is adenosine(37) in tRNA1(Val) + S-adenosyl-L-methionine = N(6)-methyladenosine(37) in tRNA1(Val) + S-adenosyl-L-homocysteine + H(+). In terms of biological role, specifically methylates the adenine in position 37 of tRNA(1)(Val) (anticodon cmo5UAC). This Porphyromonas gingivalis (strain ATCC BAA-308 / W83) protein is tRNA1(Val) (adenine(37)-N6)-methyltransferase.